An 89-amino-acid chain; its full sequence is Small ribosomal subunit protein uS15 (89 aa).

Residues 1-24 (MALTQTKKQELISQYQAHETDTGS) are disordered.

It belongs to the universal ribosomal protein uS15 family. As to quaternary structure, part of the 30S ribosomal subunit. Forms a bridge to the 50S subunit in the 70S ribosome, contacting the 23S rRNA.

Its function is as follows. One of the primary rRNA binding proteins, it binds directly to 16S rRNA where it helps nucleate assembly of the platform of the 30S subunit by binding and bridging several RNA helices of the 16S rRNA. Forms an intersubunit bridge (bridge B4) with the 23S rRNA of the 50S subunit in the ribosome. In Microcystis aeruginosa (strain NIES-843 / IAM M-2473), this protein is Small ribosomal subunit protein uS15.